Reading from the N-terminus, the 109-residue chain is Probable guanidinium efflux system subunit GdnC (109 aa).

4 helical membrane-spanning segments follow: residues 3 to 23 (WGSV…LKHA), 26 to 46 (ALEW…LVKA), 55 to 75 (VYAV…IALF), and 81 to 101 (IAKL…KLVT).

This sequence belongs to the drug/metabolite transporter (DMT) superfamily. Small multidrug resistance (SMR) (TC 2.A.7.1) family. YkkC/YkkD subfamily. The efflux pump is composed of GdnC and GdnD.

It localises to the cell membrane. In terms of biological role, probably involved in guanidinium transport. The protein is Probable guanidinium efflux system subunit GdnC of Bacillus licheniformis (strain ATCC 14580 / DSM 13 / JCM 2505 / CCUG 7422 / NBRC 12200 / NCIMB 9375 / NCTC 10341 / NRRL NRS-1264 / Gibson 46).